The sequence spans 259 residues: Putative hydro-lyase Rxyl_2409 (259 aa).

Residues 1 to 24 are disordered; sequence MGAPGAAEARERIRRGEHAGPTAG. Positions 8-18 are enriched in basic and acidic residues; sequence EARERIRRGEH.

This sequence belongs to the D-glutamate cyclase family.

The chain is Putative hydro-lyase Rxyl_2409 from Rubrobacter xylanophilus (strain DSM 9941 / JCM 11954 / NBRC 16129 / PRD-1).